The primary structure comprises 493 residues: Probable cytosol aminopeptidase (493 aa).

Lysine 257 and aspartate 262 together coordinate Mn(2+). Lysine 269 is a catalytic residue. Aspartate 280, aspartate 339, and glutamate 341 together coordinate Mn(2+). The active site involves arginine 343.

This sequence belongs to the peptidase M17 family. Mn(2+) is required as a cofactor.

The protein localises to the cytoplasm. It catalyses the reaction Release of an N-terminal amino acid, Xaa-|-Yaa-, in which Xaa is preferably Leu, but may be other amino acids including Pro although not Arg or Lys, and Yaa may be Pro. Amino acid amides and methyl esters are also readily hydrolyzed, but rates on arylamides are exceedingly low.. The enzyme catalyses Release of an N-terminal amino acid, preferentially leucine, but not glutamic or aspartic acids.. Presumably involved in the processing and regular turnover of intracellular proteins. Catalyzes the removal of unsubstituted N-terminal amino acids from various peptides. The protein is Probable cytosol aminopeptidase (pepA) of Aquifex aeolicus (strain VF5).